The following is a 688-amino-acid chain: Zinc finger and BTB domain-containing protein 48 (688 aa).

Residues 26–89 form the BTB domain; it reads CDATLDVGGL…FYTGHLALTS (64 aa). The interval 119-140 is disordered; it reads SVGQAAGGQSGLGPPASQNVNS. A Glycyl lysine isopeptide (Lys-Gly) (interchain with G-Cter in SUMO2) cross-link involves residue Lys-143. The segment at 161 to 192 is disordered; it reads PRDQEPRGSHSPQRPQLHSPAQSEGPSSLCGK. Ser-169, Ser-171, and Ser-179 each carry phosphoserine. Positions 170–186 are enriched in polar residues; sequence HSPQRPQLHSPAQSEGP. A Glycyl lysine isopeptide (Lys-Gly) (interchain with G-Cter in SUMO2) cross-link involves residue Lys-263. The C2H2-type 1 zinc-finger motif lies at 291-313; sequence VECPTCHKKFLSKYYLKVHNRKH. 16 residues coordinate Zn(2+): Cys-293, Cys-296, His-309, His-313, Cys-321, Cys-324, His-337, Cys-342, Cys-352, Cys-355, His-368, His-372, Cys-380, Cys-383, His-396, and His-401. The segment at 319–344 adopts a CCHC-type zinc-finger fold; sequence FECPKCGKCYFRKENLLEHEARNCMN. C2H2-type zinc fingers lie at residues 350 to 372, 378 to 401, 407 to 430, 436 to 459, 465 to 487, 493 to 515, 521 to 544, 550 to 572, and 578 to 600; these read FTCS…MVSH, YKCS…IKLH, HACP…AFKH, FVCE…KAKH, HVCE…LRTH, FQCH…NRTH, FSCE…ASRH, HFCQ…VRRH, and FECT…MEIH. Cys-552, Cys-555, His-568, Cys-580, Cys-583, His-596, and His-600 together coordinate Zn(2+).

It belongs to the krueppel C2H2-type zinc-finger protein family. As to quaternary structure, interacts with EP300. In terms of tissue distribution, detected in adrenal gland and neuroblastoma.

It is found in the nucleus. The protein localises to the chromosome. Its subcellular location is the telomere. Functionally, plays a critical role in transcriptional regulation and chromatin remodeling. Acts as a regulator of telomere length. Directly binds the telomeric double-stranded 5'-TTAGGG-3' repeat. Preferentially binds to telomeres that have a low concentration of shelterin complex and acts as a regulator of telomere length by initiating telomere trimming, a process that prevents the accumulation of aberrantly long telomeres. Also acts as a transcription regulator that binds to promoter regions. Regulates expression of a small subset of genes, including MTFP1. Acts as a negative regulator of cell proliferation by specifically activating expression of ARF, a tumor suppressor isoform of CDKN2A. Acts as a transcription regulator of CIITA, the major factor regulating MHC class II gene expression. In addition, regulates cellular m6A/m6Am methylation on RNA by facilitating the recruitment of the RNA demethylase, FTO, to target mRNAs. The chain is Zinc finger and BTB domain-containing protein 48 from Homo sapiens (Human).